A 607-amino-acid polypeptide reads, in one-letter code: Polyphenol oxidase, chloroplastic (607 aa).

The transit peptide at Met1–Gly103 directs the protein to the chloroplast. The tract at residues Arg39–Gly73 is disordered. Over residues Val50–Thr64 the composition is skewed to polar residues. Intrachain disulfides connect Cys114–Cys129 and Cys128–Cys191. His190, His211, His220, His342, His346, and His375 together coordinate Cu cation. The 2'-(S-cysteinyl)-histidine (Cys-His) cross-link spans Cys194–His211.

The protein belongs to the tyrosinase family. Cu(2+) serves as cofactor.

Its subcellular location is the plastid. The protein localises to the chloroplast thylakoid lumen. It carries out the reaction 2 catechol + O2 = 2 1,2-benzoquinone + 2 H2O. Its function is as follows. Catalyzes the oxidation of mono- and o-diphenols to o-diquinones. This is Polyphenol oxidase, chloroplastic from Vitis vinifera (Grape).